The following is a 132-amino-acid chain: Small ribosomal subunit protein uS8 (132 aa).

Belongs to the universal ribosomal protein uS8 family. Part of the 30S ribosomal subunit. Contacts proteins S5 and S12.

Functionally, one of the primary rRNA binding proteins, it binds directly to 16S rRNA central domain where it helps coordinate assembly of the platform of the 30S subunit. The protein is Small ribosomal subunit protein uS8 of Rhodopseudomonas palustris (strain BisA53).